We begin with the raw amino-acid sequence, 288 residues long: Bifunctional protein FolD 2 (288 aa).

Residues 166-168 (GRS) and Ser191 contribute to the NADP(+) site.

It belongs to the tetrahydrofolate dehydrogenase/cyclohydrolase family. In terms of assembly, homodimer.

It catalyses the reaction (6R)-5,10-methylene-5,6,7,8-tetrahydrofolate + NADP(+) = (6R)-5,10-methenyltetrahydrofolate + NADPH. The enzyme catalyses (6R)-5,10-methenyltetrahydrofolate + H2O = (6R)-10-formyltetrahydrofolate + H(+). Its pathway is one-carbon metabolism; tetrahydrofolate interconversion. Catalyzes the oxidation of 5,10-methylenetetrahydrofolate to 5,10-methenyltetrahydrofolate and then the hydrolysis of 5,10-methenyltetrahydrofolate to 10-formyltetrahydrofolate. The polypeptide is Bifunctional protein FolD 2 (Frankia alni (strain DSM 45986 / CECT 9034 / ACN14a)).